The primary structure comprises 329 residues: Glycerol-3-phosphate dehydrogenase [NAD(P)+] (329 aa).

Trp-11, Arg-31, and Lys-105 together coordinate NADPH. Positions 105, 135, and 137 each coordinate sn-glycerol 3-phosphate. Position 139 (Ala-139) interacts with NADPH. Sn-glycerol 3-phosphate-binding residues include Lys-190, Asp-243, Ser-253, Arg-254, and Asn-255. Lys-190 functions as the Proton acceptor in the catalytic mechanism. NADPH is bound at residue Arg-254. NADPH-binding residues include Val-277 and Glu-279.

Belongs to the NAD-dependent glycerol-3-phosphate dehydrogenase family.

It is found in the cytoplasm. It catalyses the reaction sn-glycerol 3-phosphate + NAD(+) = dihydroxyacetone phosphate + NADH + H(+). The catalysed reaction is sn-glycerol 3-phosphate + NADP(+) = dihydroxyacetone phosphate + NADPH + H(+). The protein operates within membrane lipid metabolism; glycerophospholipid metabolism. Catalyzes the reduction of the glycolytic intermediate dihydroxyacetone phosphate (DHAP) to sn-glycerol 3-phosphate (G3P), the key precursor for phospholipid synthesis. The protein is Glycerol-3-phosphate dehydrogenase [NAD(P)+] of Maridesulfovibrio salexigens (strain ATCC 14822 / DSM 2638 / NCIMB 8403 / VKM B-1763) (Desulfovibrio salexigens).